The sequence spans 344 residues: 4-dimethylallyltryptophan N-methyltransferase easF (344 aa).

It belongs to the methyltransferase superfamily. As to quaternary structure, homodimer.

The catalysed reaction is 4-(3-methylbut-2-enyl)-L-tryptophan + S-adenosyl-L-methionine = 4-(3-methylbut-2-enyl)-L-abrine + S-adenosyl-L-homocysteine + H(+). The protein operates within alkaloid biosynthesis; ergot alkaloid biosynthesis. 4-dimethylallyltryptophan N-methyltransferase; part of the gene cluster that mediates the biosynthesis of fungal ergot alkaloid. DmaW catalyzes the first step of ergot alkaloid biosynthesis by condensing dimethylallyl diphosphate (DMAP) and tryptophan to form 4-dimethylallyl-L-tryptophan. The second step is catalyzed by the methyltransferase easF that methylates 4-dimethylallyl-L-tryptophan in the presence of S-adenosyl-L-methionine, resulting in the formation of 4-dimethylallyl-L-abrine. The catalase easC and the FAD-dependent oxidoreductase easE then transform 4-dimethylallyl-L-abrine to chanoclavine-I which is further oxidized by easD in the presence of NAD(+), resulting in the formation of chanoclavine-I aldehyde. Agroclavine dehydrogenase easG then mediates the conversion of chanoclavine-I aldehyde to agroclavine via a non-enzymatic adduct reaction: the substrate is an iminium intermediate that is formed spontaneously from chanoclavine-I aldehyde in the presence of glutathione. The presence of easA is not required to complete this reaction. Further conversion of agroclavine to paspalic acid is a two-step process involving oxidation of agroclavine to elymoclavine and of elymoclavine to paspalic acid, the second step being performed by the elymoclavine oxidase cloA. Paspalic acid is then further converted to D-lysergic acid. Ergopeptines are assembled from D-lysergic acid and three different amino acids by the D-lysergyl-peptide-synthetases composed each of a monomudular and a trimodular nonribosomal peptide synthetase subunit. LpsB and lpsC encode the monomodular subunits responsible for D-lysergic acid activation and incorporation into the ergopeptine backbone. LpsA1 and A2 subunits encode the trimodular nonribosomal peptide synthetase assembling the tripeptide portion of ergopeptines. LpsA1 is responsible for formation of the major ergopeptine, ergotamine, and lpsA2 for alpha-ergocryptine, the minor ergopeptine of the total alkaloid mixture elaborated by C.purpurea. D-lysergyl-tripeptides are assembled by the nonribosomal peptide synthetases and released as N-(D-lysergyl-aminoacyl)-lactams. Cyclolization of the D-lysergyl-tripeptides is performed by the Fe(2+)/2-ketoglutarate-dependent dioxygenase easH which introduces a hydroxyl group into N-(D-lysergyl-aminoacyl)-lactam at alpha-C of the aminoacyl residue followed by spontaneous condensation with the terminal lactam carbonyl group. The polypeptide is 4-dimethylallyltryptophan N-methyltransferase easF (Claviceps purpurea (strain 20.1) (Ergot fungus)).